Reading from the N-terminus, the 302-residue chain is Glutaminase (302 aa).

Substrate contacts are provided by Ser61, Asn111, Glu155, Asn162, Tyr186, Tyr238, and Val256.

The protein belongs to the glutaminase family. Homotetramer.

The enzyme catalyses L-glutamine + H2O = L-glutamate + NH4(+). This Pseudomonas syringae pv. tomato (strain ATCC BAA-871 / DC3000) protein is Glutaminase.